Here is a 289-residue protein sequence, read N- to C-terminus: Probable endonuclease 4 (289 aa).

His-76, His-116, Glu-152, Asp-186, His-189, His-220, Asp-233, His-235, and Glu-265 together coordinate Zn(2+).

This sequence belongs to the AP endonuclease 2 family. Zn(2+) is required as a cofactor.

It catalyses the reaction Endonucleolytic cleavage to 5'-phosphooligonucleotide end-products.. Its function is as follows. Endonuclease IV plays a role in DNA repair. It cleaves phosphodiester bonds at apurinic or apyrimidinic (AP) sites, generating a 3'-hydroxyl group and a 5'-terminal sugar phosphate. This is Probable endonuclease 4 from Malacoplasma penetrans (strain HF-2) (Mycoplasma penetrans).